Consider the following 1235-residue polypeptide: DNA polymerase catalytic subunit (1235 aa).

Disordered regions lie at residues 640–691 and 1098–1134; these read QGRF…ETAG and AAAP…ASKP. The span at 650–661 shows a compositional bias: basic and acidic residues; that stretch reads APKRPAAAREDE. Acidic residues predominate over residues 662 to 675; sequence ERPEEEGEDEDERE. Over residues 676–691 the composition is skewed to basic and acidic residues; sequence EGGGEREPDGARETAG.

The protein belongs to the DNA polymerase type-B family. In terms of assembly, forms a complex with the ssDNA-binding protein UL29, the DNA polymerase processivity factor, and the alkaline exonuclease. Interacts with the putative helicase-primase complex subunit UL8; this interaction may coordinate leading and lagging strand DNA synthesis at the replication fork.

The protein localises to the host nucleus. It catalyses the reaction DNA(n) + a 2'-deoxyribonucleoside 5'-triphosphate = DNA(n+1) + diphosphate. The catalysed reaction is Endonucleolytic cleavage to 5'-phosphomonoester.. Its function is as follows. Replicates viral genomic DNA. The replication complex is composed of six viral proteins: the DNA polymerase, processivity factor, primase, primase-associated factor, helicase, and ssDNA-binding protein. Additionally, the polymerase contains an intrinsic ribonuclease H (RNase H) activity that specifically degrades RNA/DNA heteroduplexes or duplex DNA substrates in the 5' to 3' direction. Therefore, it can catalyze the excision of the RNA primers that initiate the synthesis of Okazaki fragments at a replication fork during viral DNA replication. This chain is DNA polymerase catalytic subunit, found in Homo sapiens (Human).